The following is a 291-amino-acid chain: E3 ubiquitin-protein ligase RZFP34 (291 aa).

The CHY-type zinc-finger motif lies at Ile-20–Val-96. Residues Cys-27, His-29, Cys-40, Cys-41, Cys-47, Cys-50, His-51, His-66, Cys-78, Cys-81, Cys-91, Cys-94, Cys-103, Cys-106, His-119, Cys-120, Cys-123, Cys-126, His-136, Cys-137, Cys-140, Cys-143, His-152, and Cys-154 each coordinate Zn(2+). The segment at Met-98–Asn-162 adopts a CTCHY-type zinc-finger fold. The RING-type; atypical zinc finger occupies Cys-163 to Ser-206. Residue Ser-173 is modified to Phosphoserine. Thr-178 is subject to Phosphothreonine. Phosphoserine is present on Ser-208. A disordered region spans residues Gln-271–Gly-291.

As to quaternary structure, interacts with SRK2D/2SNRK2.2, SRK2I/SNRK2.3 and SRK2E/SNRK2.6. Phosphorylated at Ser-173, Thr-178 and Ser-208 by SRK2E/SNRK2.6 in response to abscisic acid (ABA). Phosphorylation activates its E3 ubiquitin-protein ligase activity. Expressed in roots, leaves, and anthers and stigma of open flowers.

It is found in the nucleus. The protein localises to the cytoplasm. The protein resides in the endoplasmic reticulum. The enzyme catalyses S-ubiquitinyl-[E2 ubiquitin-conjugating enzyme]-L-cysteine + [acceptor protein]-L-lysine = [E2 ubiquitin-conjugating enzyme]-L-cysteine + N(6)-ubiquitinyl-[acceptor protein]-L-lysine.. It functions in the pathway protein modification; protein ubiquitination. Functionally, possesses E3 ubiquitin-protein ligase activity in vitro. Mediates mainly 'Lys-48'-linked polyubiquitination. Promotes abscisic acid (ABA)-induced stomatal closure, reactive oxygen species (ROS) production and drought tolerance. Involved in the regulation of stomatal aperture. This Arabidopsis thaliana (Mouse-ear cress) protein is E3 ubiquitin-protein ligase RZFP34.